The sequence spans 626 residues: tRNA uridine 5-carboxymethylaminomethyl modification enzyme MnmG (626 aa).

14–19 (GAGHAG) serves as a coordination point for FAD. 273–287 (GPRYCPSIEDKVVRF) is a binding site for NAD(+).

This sequence belongs to the MnmG family. Homodimer. Heterotetramer of two MnmE and two MnmG subunits. FAD serves as cofactor.

The protein resides in the cytoplasm. In terms of biological role, NAD-binding protein involved in the addition of a carboxymethylaminomethyl (cmnm) group at the wobble position (U34) of certain tRNAs, forming tRNA-cmnm(5)s(2)U34. The chain is tRNA uridine 5-carboxymethylaminomethyl modification enzyme MnmG from Caldicellulosiruptor saccharolyticus (strain ATCC 43494 / DSM 8903 / Tp8T 6331).